A 478-amino-acid polypeptide reads, in one-letter code: Glucose-6-phosphate 1-dehydrogenase (478 aa).

NADP(+) contacts are provided by residues arginine 48, 86 to 87 (DF), and lysine 142. 4 residues coordinate substrate: histidine 172, lysine 176, glutamate 210, and aspartate 229. Histidine 234 acts as the Proton acceptor in catalysis. Lysine 334 and lysine 339 together coordinate substrate.

Belongs to the glucose-6-phosphate dehydrogenase family.

The catalysed reaction is D-glucose 6-phosphate + NADP(+) = 6-phospho-D-glucono-1,5-lactone + NADPH + H(+). Its pathway is carbohydrate degradation; pentose phosphate pathway; D-ribulose 5-phosphate from D-glucose 6-phosphate (oxidative stage): step 1/3. Its function is as follows. Catalyzes the oxidation of glucose 6-phosphate to 6-phosphogluconolactone. The chain is Glucose-6-phosphate 1-dehydrogenase from Borreliella burgdorferi (strain ATCC 35210 / DSM 4680 / CIP 102532 / B31) (Borrelia burgdorferi).